The chain runs to 204 residues: Holliday junction branch migration complex subunit RuvA (204 aa).

A domain I region spans residues 1-63 (MIGKLSGKVD…EEHIHLYGFL (63 aa)). Positions 64–142 (TLEEKIFFNL…KISSGSAIIK (79 aa)) are domain II. Residues 143-149 (ESLNIKN) form a flexible linker region. Residues 150–204 (ITPVASNEVIKALVNLGFSRFEAQNAVQGIITQNPEISIDELIKTALKNRNSNFS) form a domain III region.

This sequence belongs to the RuvA family. In terms of assembly, homotetramer. Forms an RuvA(8)-RuvB(12)-Holliday junction (HJ) complex. HJ DNA is sandwiched between 2 RuvA tetramers; dsDNA enters through RuvA and exits via RuvB. An RuvB hexamer assembles on each DNA strand where it exits the tetramer. Each RuvB hexamer is contacted by two RuvA subunits (via domain III) on 2 adjacent RuvB subunits; this complex drives branch migration. In the full resolvosome a probable DNA-RuvA(4)-RuvB(12)-RuvC(2) complex forms which resolves the HJ.

It is found in the cytoplasm. In terms of biological role, the RuvA-RuvB-RuvC complex processes Holliday junction (HJ) DNA during genetic recombination and DNA repair, while the RuvA-RuvB complex plays an important role in the rescue of blocked DNA replication forks via replication fork reversal (RFR). RuvA specifically binds to HJ cruciform DNA, conferring on it an open structure. The RuvB hexamer acts as an ATP-dependent pump, pulling dsDNA into and through the RuvAB complex. HJ branch migration allows RuvC to scan DNA until it finds its consensus sequence, where it cleaves and resolves the cruciform DNA. The chain is Holliday junction branch migration complex subunit RuvA from Rickettsia rickettsii (strain Iowa).